Consider the following 357-residue polypeptide: Glutamine synthetase cytosolic isozyme 1-2 (357 aa).

Residues 19–99 enclose the GS beta-grasp domain; sequence IIAEYIWVGG…VMCDCYTPQG (81 aa). The 252-residue stretch at 106–357 folds into the GS catalytic domain; it reads KRHSAAKIFS…AETTLLWKQN (252 aa).

It belongs to the glutamine synthetase family. As to quaternary structure, homooctamer. In terms of tissue distribution, expressed in roots and at lower levels in leaf blades and spikelets (rice flower).

It localises to the cytoplasm. The catalysed reaction is L-glutamate + NH4(+) + ATP = L-glutamine + ADP + phosphate + H(+). Functionally, high-affinity glutamine synthetase involved in ammonium assimilation. Plays an important role in the primary assimilation of ammonium taken up by roots. Plays a role in maintaining nitrogen metabolic balance during ammonium assimilation, thus controlling plant growth and development. Reassimilates ammonium generated during lignification within developing tillers, which is probably required for the outgrowth of axillary buds. Required for nitrogen-dependent biosynthesis of cytokinin. Active cytokinin in axillary bud meristem is required for axillary bud outgrowth and necessary for tillering. In Oryza sativa subsp. japonica (Rice), this protein is Glutamine synthetase cytosolic isozyme 1-2.